The primary structure comprises 290 residues: 4-hydroxy-tetrahydrodipicolinate synthase (290 aa).

Threonine 44 provides a ligand contact to pyruvate. The active-site Proton donor/acceptor is tyrosine 132. Lysine 160 serves as the catalytic Schiff-base intermediate with substrate. A pyruvate-binding site is contributed by isoleucine 202.

Belongs to the DapA family. Homotetramer; dimer of dimers.

Its subcellular location is the cytoplasm. The catalysed reaction is L-aspartate 4-semialdehyde + pyruvate = (2S,4S)-4-hydroxy-2,3,4,5-tetrahydrodipicolinate + H2O + H(+). It functions in the pathway amino-acid biosynthesis; L-lysine biosynthesis via DAP pathway; (S)-tetrahydrodipicolinate from L-aspartate: step 3/4. Functionally, catalyzes the condensation of (S)-aspartate-beta-semialdehyde [(S)-ASA] and pyruvate to 4-hydroxy-tetrahydrodipicolinate (HTPA). This chain is 4-hydroxy-tetrahydrodipicolinate synthase, found in Geobacter metallireducens (strain ATCC 53774 / DSM 7210 / GS-15).